The primary structure comprises 494 residues: Guanosine-5'-triphosphate,3'-diphosphate pyrophosphatase (494 aa).

It belongs to the GppA/Ppx family. GppA subfamily.

It catalyses the reaction guanosine 3'-diphosphate 5'-triphosphate + H2O = guanosine 3',5'-bis(diphosphate) + phosphate + H(+). It participates in purine metabolism; ppGpp biosynthesis; ppGpp from GTP: step 2/2. Its function is as follows. Catalyzes the conversion of pppGpp to ppGpp. Guanosine pentaphosphate (pppGpp) is a cytoplasmic signaling molecule which together with ppGpp controls the 'stringent response', an adaptive process that allows bacteria to respond to amino acid starvation, resulting in the coordinated regulation of numerous cellular activities. The polypeptide is Guanosine-5'-triphosphate,3'-diphosphate pyrophosphatase (Escherichia coli (strain 55989 / EAEC)).